The following is a 327-amino-acid chain: o-succinylbenzoate synthase (327 aa).

The Proton donor role is filled by Lys110. Positions 138, 165, and 188 each coordinate Mg(2+). Lys212 serves as the catalytic Proton acceptor.

The protein belongs to the mandelate racemase/muconate lactonizing enzyme family. MenC type 1 subfamily. Requires a divalent metal cation as cofactor.

It carries out the reaction (1R,6R)-6-hydroxy-2-succinyl-cyclohexa-2,4-diene-1-carboxylate = 2-succinylbenzoate + H2O. It participates in quinol/quinone metabolism; 1,4-dihydroxy-2-naphthoate biosynthesis; 1,4-dihydroxy-2-naphthoate from chorismate: step 4/7. It functions in the pathway quinol/quinone metabolism; menaquinone biosynthesis. Functionally, converts 2-succinyl-6-hydroxy-2,4-cyclohexadiene-1-carboxylate (SHCHC) to 2-succinylbenzoate (OSB). The chain is o-succinylbenzoate synthase from Mycobacterium marinum (strain ATCC BAA-535 / M).